A 582-amino-acid chain; its full sequence is Formate--tetrahydrofolate ligase (582 aa).

65 to 72 (TPLGEGKT) contributes to the ATP binding site.

The protein belongs to the formate--tetrahydrofolate ligase family.

It catalyses the reaction (6S)-5,6,7,8-tetrahydrofolate + formate + ATP = (6R)-10-formyltetrahydrofolate + ADP + phosphate. It functions in the pathway one-carbon metabolism; tetrahydrofolate interconversion. The protein is Formate--tetrahydrofolate ligase of Vibrio vulnificus (strain CMCP6).